Consider the following 159-residue polypeptide: MIRIGHGFDVHAFGEARPLIIGGVEVPYHTGFIAHSDGDVALHALTDALLGALALGDIGKLFPDTDMQFKNIDSRILLREAFRRVQEKGYKIGNVDVTIIAQAPKMRPHIDAMRAVIAEDLQCSVEQVNVKATTTEKLGFTGRSEGITTEAVALLVKSC.

A divalent metal cation-binding residues include Asp9 and His11. 4-CDP-2-C-methyl-D-erythritol 2-phosphate is bound by residues 9–11 and 35–36; these read DVH and HS. An a divalent metal cation-binding site is contributed by His43. 4-CDP-2-C-methyl-D-erythritol 2-phosphate is bound by residues 57–59, 62–66, 133–136, Phe140, and Arg143; these read DIG, FPDTD, and TTTE.

Belongs to the IspF family. In terms of assembly, homotrimer. A divalent metal cation is required as a cofactor.

The enzyme catalyses 4-CDP-2-C-methyl-D-erythritol 2-phosphate = 2-C-methyl-D-erythritol 2,4-cyclic diphosphate + CMP. The protein operates within isoprenoid biosynthesis; isopentenyl diphosphate biosynthesis via DXP pathway; isopentenyl diphosphate from 1-deoxy-D-xylulose 5-phosphate: step 4/6. Functionally, involved in the biosynthesis of isopentenyl diphosphate (IPP) and dimethylallyl diphosphate (DMAPP), two major building blocks of isoprenoid compounds. Catalyzes the conversion of 4-diphosphocytidyl-2-C-methyl-D-erythritol 2-phosphate (CDP-ME2P) to 2-C-methyl-D-erythritol 2,4-cyclodiphosphate (ME-CPP) with a corresponding release of cytidine 5-monophosphate (CMP). The chain is 2-C-methyl-D-erythritol 2,4-cyclodiphosphate synthase from Mannheimia succiniciproducens (strain KCTC 0769BP / MBEL55E).